A 1297-amino-acid chain; its full sequence is Phosphoribosylformylglycinamidine synthase (1297 aa).

The tract at residues 303-329 (ISPFPGAATGSGGEIRDEGATGRGAKP) is disordered. An ATP-binding site is contributed by 308–319 (GAATGSGGEIRD). Positions 680, 719, 723, and 887 each coordinate Mg(2+). Residue Ser889 participates in ATP binding. The 253-residue stretch at 1045–1297 (IAILREQGVN…RLFRNARMVF (253 aa)) folds into the Glutamine amidotransferase type-1 domain. Cys1138 functions as the Nucleophile in the catalytic mechanism. Active-site residues include His1263 and Glu1265.

In the N-terminal section; belongs to the FGAMS family. As to quaternary structure, monomer.

Its subcellular location is the cytoplasm. It catalyses the reaction N(2)-formyl-N(1)-(5-phospho-beta-D-ribosyl)glycinamide + L-glutamine + ATP + H2O = 2-formamido-N(1)-(5-O-phospho-beta-D-ribosyl)acetamidine + L-glutamate + ADP + phosphate + H(+). The protein operates within purine metabolism; IMP biosynthesis via de novo pathway; 5-amino-1-(5-phospho-D-ribosyl)imidazole from N(2)-formyl-N(1)-(5-phospho-D-ribosyl)glycinamide: step 1/2. Functionally, phosphoribosylformylglycinamidine synthase involved in the purines biosynthetic pathway. Catalyzes the ATP-dependent conversion of formylglycinamide ribonucleotide (FGAR) and glutamine to yield formylglycinamidine ribonucleotide (FGAM) and glutamate. This is Phosphoribosylformylglycinamidine synthase from Haemophilus influenzae (strain 86-028NP).